The sequence spans 378 residues: Mannitol-1-phosphate 5-dehydrogenase (378 aa).

4-15 (SVHFGAGNIGRG) is a binding site for NAD(+).

The protein belongs to the mannitol dehydrogenase family.

It carries out the reaction D-mannitol 1-phosphate + NAD(+) = beta-D-fructose 6-phosphate + NADH + H(+). The polypeptide is Mannitol-1-phosphate 5-dehydrogenase (Streptococcus pneumoniae (strain 70585)).